The following is a 355-amino-acid chain: Fructose-bisphosphate aldolase, cytoplasmic isozyme (355 aa).

Residues Arg52 and Lys142 each contribute to the substrate site. Glu183 (proton acceptor) is an active-site residue. The active-site Schiff-base intermediate with dihydroxyacetone-P is Lys225.

This sequence belongs to the class I fructose-bisphosphate aldolase family.

The protein resides in the cytoplasm. It catalyses the reaction beta-D-fructose 1,6-bisphosphate = D-glyceraldehyde 3-phosphate + dihydroxyacetone phosphate. It functions in the pathway carbohydrate degradation; glycolysis; D-glyceraldehyde 3-phosphate and glycerone phosphate from D-glucose: step 4/4. In Zea mays (Maize), this protein is Fructose-bisphosphate aldolase, cytoplasmic isozyme.